Reading from the N-terminus, the 161-residue chain is 6,7-dimethyl-8-ribityllumazine synthase (161 aa).

5-amino-6-(D-ribitylamino)uracil contacts are provided by residues W26, 58-60 (AFE), and 81-83 (VVI). 86 to 87 (GT) serves as a coordination point for (2S)-2-hydroxy-3-oxobutyl phosphate. Residue H89 is the Proton donor of the active site. F114 contacts 5-amino-6-(D-ribitylamino)uracil. R128 contributes to the (2S)-2-hydroxy-3-oxobutyl phosphate binding site.

Belongs to the DMRL synthase family.

The catalysed reaction is (2S)-2-hydroxy-3-oxobutyl phosphate + 5-amino-6-(D-ribitylamino)uracil = 6,7-dimethyl-8-(1-D-ribityl)lumazine + phosphate + 2 H2O + H(+). The protein operates within cofactor biosynthesis; riboflavin biosynthesis; riboflavin from 2-hydroxy-3-oxobutyl phosphate and 5-amino-6-(D-ribitylamino)uracil: step 1/2. In terms of biological role, catalyzes the formation of 6,7-dimethyl-8-ribityllumazine by condensation of 5-amino-6-(D-ribitylamino)uracil with 3,4-dihydroxy-2-butanone 4-phosphate. This is the penultimate step in the biosynthesis of riboflavin. The chain is 6,7-dimethyl-8-ribityllumazine synthase from Nocardioides sp. (strain ATCC BAA-499 / JS614).